Consider the following 200-residue polypeptide: ATP-dependent Clp protease proteolytic subunit (200 aa).

Catalysis depends on S103, which acts as the Nucleophile. H128 is an active-site residue.

This sequence belongs to the peptidase S14 family. As to quaternary structure, fourteen ClpP subunits assemble into 2 heptameric rings which stack back to back to give a disk-like structure with a central cavity, resembling the structure of eukaryotic proteasomes.

It localises to the cytoplasm. It catalyses the reaction Hydrolysis of proteins to small peptides in the presence of ATP and magnesium. alpha-casein is the usual test substrate. In the absence of ATP, only oligopeptides shorter than five residues are hydrolyzed (such as succinyl-Leu-Tyr-|-NHMec, and Leu-Tyr-Leu-|-Tyr-Trp, in which cleavage of the -Tyr-|-Leu- and -Tyr-|-Trp bonds also occurs).. Functionally, cleaves peptides in various proteins in a process that requires ATP hydrolysis. Has a chymotrypsin-like activity. Plays a major role in the degradation of misfolded proteins. The chain is ATP-dependent Clp protease proteolytic subunit from Vibrio cholerae serotype O1 (strain ATCC 39541 / Classical Ogawa 395 / O395).